Reading from the N-terminus, the 362-residue chain is Major capsid protein VP1 (362 aa).

Positions 5-19 (KRKGECPGAAPKKPK) match the Bipartite nuclear localization signal motif. Position 338 is a phosphothreonine; by host (Thr-338).

It belongs to the polyomaviruses coat protein VP1 family. As to quaternary structure, homomultimer; disulfide-linked. The virus capsid is composed of 72 icosahedral units, each one composed of five disulfide-linked copies of VP1. Interacts with minor capsid proteins VP2 and VP3.

Its subcellular location is the virion. The protein localises to the host nucleus. Forms an icosahedral capsid with a T=7 symmetry and a 40 nm diameter. The capsid is composed of 72 pentamers linked to each other by disulfide bonds and associated with VP2 or VP3 proteins. Interacts with sialic acids on the cell surface to provide virion attachment to target cell. Once attached, the virion is internalized by endocytosis and traffics to the endoplasmic reticulum. Inside the endoplasmic reticulum, the protein folding machinery isomerizes VP1 interpentamer disulfide bonds, thereby triggering initial uncoating. Next, the virion uses the endoplasmic reticulum-associated degradation machinery to probably translocate in the cytosol before reaching the nucleus. Nuclear entry of the viral DNA involves the selective exposure and importin recognition of VP2/Vp3 nuclear localization signal. In late phase of infection, neo-synthesized VP1 encapsulates replicated genomic DNA in the nucleus, and participates in rearranging nucleosomes around the viral DNA. The polypeptide is Major capsid protein VP1 (Simian virus 12 (strain wt100) (SV-12)).